Consider the following 103-residue polypeptide: MSQQARVRLAGTSPEDLDDICADVREIANKTGVELSGPVPLPTKTLEVPSRKSPDGEGTATWEHWEMRVHKRLIDIDADERALRQLMRIQVPNDVSIEIVLED.

Residues 35-59 are disordered; that stretch reads LSGPVPLPTKTLEVPSRKSPDGEGT.

It belongs to the universal ribosomal protein uS10 family. In terms of assembly, part of the 30S ribosomal subunit.

Its function is as follows. Involved in the binding of tRNA to the ribosomes. The protein is Small ribosomal subunit protein uS10 (rps10) of Haloarcula marismortui (strain ATCC 43049 / DSM 3752 / JCM 8966 / VKM B-1809) (Halobacterium marismortui).